Reading from the N-terminus, the 394-residue chain is QWRF motif-containing protein 7 (394 aa).

Residues 1–171 (MATTGRRLRP…ESPVSKAKIR (171 aa)) form a disordered region. A compositionally biased stretch (low complexity) spans 14-67 (NNNRSRTISSSISLPVSLNASLSSSTSSSSSSSPSNSSKRVMITRSQSTTRSSR). Residues 85-96 (NSASRSQEINNG) show a composition bias toward polar residues. The span at 97 to 110 (RSRESFARYLEQRT) shows a compositional bias: basic and acidic residues. Composition is skewed to polar residues over residues 111-120 (RGSPRSNASS) and 142-157 (TMKT…TSMC). The QWRF motif motif lies at 211-214 (QWRF).

Belongs to the QWRF family.

This Arabidopsis thaliana (Mouse-ear cress) protein is QWRF motif-containing protein 7 (QWRF7).